Consider the following 407-residue polypeptide: E3 ubiquitin-protein ligase TRIM13 (407 aa).

The RING-type zinc-finger motif lies at 10–58 (CPICCSLFDDPRVLPCSHNFCKKCLEGILEGNVRNSLWRSSPFKCPTCR). The B box-type zinc finger occupies 89–131 (PKMPVCKGHLGQPLNIFCLTDMQLICGICATRGEHTKHVFCSI). The Zn(2+) site is built by Cys94, His97, Cys117, and His123. The stretch at 172–200 (LQLLTKDSDKVKEFFEKLQYTLDQKKNEI) forms a coiled coil. A helical membrane pass occupies residues 316 to 336 (PLFVVVILLGLLIFFSPTMFL).

In terms of assembly, interacts (via C-terminal domain) with VCP. Interacts with AKT1; the interaction ubiquitinates AKT1 and leads to its proteasomal degradation. Interacts with MDM2; the interaction ubiquitinates AKT1 and leads to its proteasomal degradation. Interacts with p62/SQSTM1. Interacts with TRAF6. Interacts with IKBKG/NEMO. Auto-ubiquitinated; requires the RING-type zinc finger. Auto-polyubiquitination leads to proteasomal degradation.

Its subcellular location is the endoplasmic reticulum membrane. It catalyses the reaction S-ubiquitinyl-[E2 ubiquitin-conjugating enzyme]-L-cysteine + [acceptor protein]-L-lysine = [E2 ubiquitin-conjugating enzyme]-L-cysteine + N(6)-ubiquitinyl-[acceptor protein]-L-lysine.. It functions in the pathway protein modification; protein ubiquitination. Its function is as follows. Endoplasmic reticulum (ER) membrane anchored E3 ligase involved in the retrotranslocation and turnover of membrane and secretory proteins from the ER through a set of processes named ER-associated degradation (ERAD). This process acts on misfolded proteins as well as in the regulated degradation of correctly folded proteins. Enhances ionizing radiation-induced p53/TP53 stability and apoptosis via ubiquitinating MDM2 and AKT1 and decreasing AKT1 kinase activity through MDM2 and AKT1 proteasomal degradation. Regulates ER stress-induced autophagy, and may act as a tumor suppressor. Also plays a role in innate immune response by stimulating NF-kappa-B activity in the TLR2 signaling pathway. Ubiquitinates TRAF6 via the 'Lys-29'-linked polyubiquitination chain resulting in NF-kappa-B activation. Participates as well in T-cell receptor-mediated NF-kappa-B activation. In the presence of TNF, modulates the IKK complex by regulating IKBKG/NEMO ubiquitination leading to the repression of NF-kappa-B. The chain is E3 ubiquitin-protein ligase TRIM13 (TRIM13) from Bos taurus (Bovine).